Here is a 367-residue protein sequence, read N- to C-terminus: Polygalacturonase (367 aa).

The N-terminal stretch at 1-18 (MRTSFVTMLALGAAAVSA) is a signal peptide. An intrachain disulfide couples C34 to C49. PbH1 repeat units follow at residues 161–191 (ADRLTLDHITIDNSEGDAKGGHNTDAFDVGS), 192–213 (STFITISNANIKNQDDCLAINS), 214–234 (GSNIKFVGGTCSGGHGISIGS), 243–264 (VKDVTISDSTVINSDNGVRVKT), and 272–294 (VSGVTFSNIKLSNIAKYGIVIEQ). The Proton donor role is filled by D206. A disulfide bond links C208 and C224. The active site involves H228. N318 and N336 each carry an N-linked (GlcNAc...) asparagine glycan. 2 disulfide bridges follow: C334/C339 and C358/C367.

Belongs to the glycosyl hydrolase 28 family.

It localises to the secreted. The enzyme catalyses (1,4-alpha-D-galacturonosyl)n+m + H2O = (1,4-alpha-D-galacturonosyl)n + (1,4-alpha-D-galacturonosyl)m.. The chain is Polygalacturonase (PG1) from Penicillium digitatum (Green mold).